A 77-amino-acid chain; its full sequence is Neurexophilin-4 (77 aa).

A v (Cys-rich) region spans residues 1-77; that stretch reads NCHVEYEKTN…NFQSEHPYFG (77 aa).

It belongs to the neurexophilin family. In terms of processing, may be proteolytically processed at the boundary between the N-terminal non-conserved and the central conserved domain in neuron-like cells.

The protein resides in the secreted. In terms of biological role, may be signaling molecules that resemble neuropeptides and that act by binding to alpha-neurexins and possibly other receptors. This chain is Neurexophilin-4 (NXPH4), found in Macaca mulatta (Rhesus macaque).